The following is a 271-amino-acid chain: Protein-L-isoaspartate O-methyltransferase (271 aa).

Residues 1–15 show a composition bias toward pro residues; it reads MRKPVTPPGNPPRPR. Residues 1–60 are disordered; it reads MRKPVTPPGNPPRPRSPGYGSTSLAPGITAANSNTRISPPTLARPAPAAGAGGQGGNLGL. The span at 39–49 shows a compositional bias: low complexity; the sequence is PPTLARPAPAA. Ser119 is an active-site residue.

The protein belongs to the methyltransferase superfamily. L-isoaspartyl/D-aspartyl protein methyltransferase family.

The protein localises to the cytoplasm. The catalysed reaction is [protein]-L-isoaspartate + S-adenosyl-L-methionine = [protein]-L-isoaspartate alpha-methyl ester + S-adenosyl-L-homocysteine. Its function is as follows. Catalyzes the methyl esterification of L-isoaspartyl residues in peptides and proteins that result from spontaneous decomposition of normal L-aspartyl and L-asparaginyl residues. It plays a role in the repair and/or degradation of damaged proteins. The polypeptide is Protein-L-isoaspartate O-methyltransferase (Bordetella petrii (strain ATCC BAA-461 / DSM 12804 / CCUG 43448)).